The following is a 286-amino-acid chain: Putative WUSCHEL-related homeobox 2 (286 aa).

Residues 1–25 form a disordered region; that stretch reads MAPAVQQQQSGGGGGSTGAAAVGST. Positions 23–87 form a DNA-binding region, homeobox; WUS-type; that stretch reads GSTTRWCPTP…NHKARDRQKL (65 aa).

The protein belongs to the WUS homeobox family.

It is found in the nucleus. In terms of biological role, transcription factor which may be involved in developmental processes. This is Putative WUSCHEL-related homeobox 2 (WOX2) from Oryza sativa subsp. japonica (Rice).